The primary structure comprises 219 residues: tRNA (guanine-N(7)-)-methyltransferase (219 aa).

S-adenosyl-L-methionine-binding residues include E51, E76, D103, and D125. The active site involves D125. Residues K129, D161, and 199–202 (TRYE) contribute to the substrate site.

This sequence belongs to the class I-like SAM-binding methyltransferase superfamily. TrmB family.

The enzyme catalyses guanosine(46) in tRNA + S-adenosyl-L-methionine = N(7)-methylguanosine(46) in tRNA + S-adenosyl-L-homocysteine. It participates in tRNA modification; N(7)-methylguanine-tRNA biosynthesis. Functionally, catalyzes the formation of N(7)-methylguanine at position 46 (m7G46) in tRNA. This chain is tRNA (guanine-N(7)-)-methyltransferase, found in Hyphomonas neptunium (strain ATCC 15444).